Reading from the N-terminus, the 90-residue chain is Probable Fe(2+)-trafficking protein (90 aa).

The protein belongs to the Fe(2+)-trafficking protein family.

Functionally, could be a mediator in iron transactions between iron acquisition and iron-requiring processes, such as synthesis and/or repair of Fe-S clusters in biosynthetic enzymes. The chain is Probable Fe(2+)-trafficking protein from Azotobacter vinelandii (strain DJ / ATCC BAA-1303).